Consider the following 94-residue polypeptide: RING finger protein Z (94 aa).

The segment at 1-22 is disordered; that stretch reads MGNCNKPPKRPPNTQTSAAQPS. The N-myristoyl glycine; by host moiety is linked to residue Gly-2. The RING-type; atypical zinc-finger motif lies at 39 to 75; sequence CKCCWFADTNLITCNDHYLCLRCHQTMLRNSELCHIC. Residues 89 to 92 carry the PTAP/PSAP motif motif; sequence PSAP.

Belongs to the arenaviridae Z protein family. In terms of assembly, interacts with protein NP; this interaction probably directs the encapsidated genome to budding sites. Interacts (via RING domain) with polymerase L; this interaction inhibits viral transcription and replication, Z partially blocks the product exit tunnel for the releasing nascent RNA product. Interacts with the glycoprotein complex; this interaction plays a role in virion budding. Interacts with host eIF4E; this interaction results in eIF4E reduced affinity for its substrate, the 5'-m7 G cap structure. Interacts (via late-budding domain) with host TSG101; this interaction is essential for budding and release of viral particles. Interacts with host RPLP0; this interaction may serve to load ribosome-like particles inside the virion. Interacts with host PML; this interaction induces PML bodies redistribution in the cytoplasm upon viral infection. Myristoylation is required for the role of RING finger protein Z in assembly and budding.

It is found in the virion. The protein resides in the host cytoplasm. It localises to the host perinuclear region. Its subcellular location is the host cell membrane. Functionally, plays a crucial role in virion assembly and budding. Expressed late in the virus life cycle, it acts as an inhibitor of viral transcription and RNA synthesis by interacting with the viral polymerase L. Presumably recruits the NP encapsidated genome to cellular membranes at budding sites via direct interaction with NP. Plays critical roles in the final steps of viral release by interacting with host TSG101, a member of the vacuolar protein-sorting pathway and using other cellular host proteins involved in vesicle formation pathway. The budding of the virus progeny occurs after association of protein Z with the viral glycoprotein complex SSP-GP1-GP2 at the cell periphery, step that requires myristoylation of protein Z. Also selectively represses protein production by associating with host eIF4E. In cell-based minigenome assay, has an inhibitory effect on the ribonucleoprotein machinery (vRNP), which is responsible for the replication and transcription of the viral genome. In Calomys callosus (Large vesper mouse), this protein is RING finger protein Z.